We begin with the raw amino-acid sequence, 279 residues long: Energy-coupling factor transporter ATP-binding protein EcfA1 (279 aa).

The 235-residue stretch at Ile6 to Asp240 folds into the ABC transporter domain. An ATP-binding site is contributed by Gly40–Ser47.

The protein belongs to the ABC transporter superfamily. Energy-coupling factor EcfA family. Forms a stable energy-coupling factor (ECF) transporter complex composed of 2 membrane-embedded substrate-binding proteins (S component), 2 ATP-binding proteins (A component) and 2 transmembrane proteins (T component).

The protein resides in the cell membrane. Functionally, ATP-binding (A) component of a common energy-coupling factor (ECF) ABC-transporter complex. Unlike classic ABC transporters this ECF transporter provides the energy necessary to transport a number of different substrates. The polypeptide is Energy-coupling factor transporter ATP-binding protein EcfA1 (Levilactobacillus brevis (strain ATCC 367 / BCRC 12310 / CIP 105137 / JCM 1170 / LMG 11437 / NCIMB 947 / NCTC 947) (Lactobacillus brevis)).